Consider the following 363-residue polypeptide: Ferrochelatase (363 aa).

Positions 209 and 290 each coordinate Fe cation.

This sequence belongs to the ferrochelatase family.

It is found in the cytoplasm. It catalyses the reaction heme b + 2 H(+) = protoporphyrin IX + Fe(2+). The protein operates within porphyrin-containing compound metabolism; protoheme biosynthesis; protoheme from protoporphyrin-IX: step 1/1. In terms of biological role, catalyzes the ferrous insertion into protoporphyrin IX. The sequence is that of Ferrochelatase from Azoarcus sp. (strain BH72).